The sequence spans 943 residues: Protein translocase subunit SecA (943 aa).

ATP is bound by residues Gln-90, Gly-108–Thr-112, and Asp-509. The segment at Asn-537–Ser-556 is disordered.

It belongs to the SecA family. Monomer and homodimer. Part of the essential Sec protein translocation apparatus which comprises SecA, SecYEG and auxiliary proteins SecDF. Other proteins may also be involved.

It is found in the cell inner membrane. The protein localises to the cellular thylakoid membrane. Its subcellular location is the cytoplasm. It catalyses the reaction ATP + H2O + cellular proteinSide 1 = ADP + phosphate + cellular proteinSide 2.. Its function is as follows. Part of the Sec protein translocase complex. Interacts with the SecYEG preprotein conducting channel. Has a central role in coupling the hydrolysis of ATP to the transfer of proteins into and across the cell membrane, serving as an ATP-driven molecular motor driving the stepwise translocation of polypeptide chains across the membrane. In terms of biological role, probably participates in protein translocation into and across both the cytoplasmic and thylakoid membranes in cyanobacterial cells. The chain is Protein translocase subunit SecA from Prochlorococcus marinus (strain MIT 9301).